A 475-amino-acid chain; its full sequence is MKYELVVGLEVHCQLNTNSKAFCGCSTRFGNPANTNVCPVCLALPGALPVLNRRVVEDAVKLGLATGCSIAPSSILARKNYFYPDLPKGYQISQFEEPICTEGMLRIDVGDGCRDIRLIRIHIEEDAGKSIHDIGDDTYIDVNRCGVPLLEIVSYPDIRTSREASAYLQKMRQIVKYLGISDGNMEEGSLRCDANVSVRLFGAEEYGTRTEIKNMNSFKNVEKAIEYEMQRHIDIIDGGGTIVQETRLWDADKGETRSMRGKEFAHDYRYFPDPDLVPVLVDQEMLERIRLELPEFPEDRERRFVSEYGIPPYDAGVLTVEREIADYFERTLTVCGDAKAASNWVMGEVMRTLKEKYLDIKEFAISPERLGGLIGLIGKGAISNTIAKQVFELMQTGEASAEEIVDREGLAQVSDTGAIERTVDEILEANPKQLADYREGKTKLFGFFVGQCMARMKGKANPQVVNDVLKSRLDG.

This sequence belongs to the GatB/GatE family. GatB subfamily. In terms of assembly, heterotrimer of A, B and C subunits.

It catalyses the reaction L-glutamyl-tRNA(Gln) + L-glutamine + ATP + H2O = L-glutaminyl-tRNA(Gln) + L-glutamate + ADP + phosphate + H(+). It carries out the reaction L-aspartyl-tRNA(Asn) + L-glutamine + ATP + H2O = L-asparaginyl-tRNA(Asn) + L-glutamate + ADP + phosphate + 2 H(+). Allows the formation of correctly charged Asn-tRNA(Asn) or Gln-tRNA(Gln) through the transamidation of misacylated Asp-tRNA(Asn) or Glu-tRNA(Gln) in organisms which lack either or both of asparaginyl-tRNA or glutaminyl-tRNA synthetases. The reaction takes place in the presence of glutamine and ATP through an activated phospho-Asp-tRNA(Asn) or phospho-Glu-tRNA(Gln). In Chlorobium limicola (strain DSM 245 / NBRC 103803 / 6330), this protein is Aspartyl/glutamyl-tRNA(Asn/Gln) amidotransferase subunit B.